The sequence spans 242 residues: Ribosomal RNA small subunit methyltransferase G (242 aa).

S-adenosyl-L-methionine contacts are provided by residues Gly78, Leu83, 130 to 131 (AE), and Arg151.

It belongs to the methyltransferase superfamily. RNA methyltransferase RsmG family.

It localises to the cytoplasm. In terms of biological role, specifically methylates the N7 position of guanine in position 518 of 16S rRNA. The sequence is that of Ribosomal RNA small subunit methyltransferase G from Salinispora arenicola (strain CNS-205).